A 396-amino-acid polypeptide reads, in one-letter code: 1-deoxy-D-xylulose 5-phosphate reductoisomerase (396 aa).

NADPH is bound by residues Thr10, Gly11, Ser12, Ile13, Asn38, and Asn123. Lys124 is a binding site for 1-deoxy-D-xylulose 5-phosphate. NADPH is bound at residue Glu125. Asp149 contributes to the Mn(2+) binding site. Residues Ser150, Glu151, Ser185, and His208 each coordinate 1-deoxy-D-xylulose 5-phosphate. Residue Glu151 participates in Mn(2+) binding. An NADPH-binding site is contributed by Gly214. Positions 221, 226, 227, and 230 each coordinate 1-deoxy-D-xylulose 5-phosphate. Residue Glu230 participates in Mn(2+) binding.

Belongs to the DXR family. Mg(2+) is required as a cofactor. Requires Mn(2+) as cofactor.

The catalysed reaction is 2-C-methyl-D-erythritol 4-phosphate + NADP(+) = 1-deoxy-D-xylulose 5-phosphate + NADPH + H(+). The protein operates within isoprenoid biosynthesis; isopentenyl diphosphate biosynthesis via DXP pathway; isopentenyl diphosphate from 1-deoxy-D-xylulose 5-phosphate: step 1/6. Functionally, catalyzes the NADPH-dependent rearrangement and reduction of 1-deoxy-D-xylulose-5-phosphate (DXP) to 2-C-methyl-D-erythritol 4-phosphate (MEP). The sequence is that of 1-deoxy-D-xylulose 5-phosphate reductoisomerase from Shewanella piezotolerans (strain WP3 / JCM 13877).